A 780-amino-acid polypeptide reads, in one-letter code: Vacuolar protein sorting-associated protein 51 homolog (780 aa).

Position 2 is an N-acetylalanine (alanine 2). Disordered stretches follow at residues 270 to 292 and 615 to 651; these read STLVEDDDSSNDTESNDQHPAKI and QGTFRKHKRTDSNGSNTTTSSRSNTLHNDKMARSNSQ. Residues 273 to 284 are compositionally biased toward acidic residues; it reads VEDDDSSNDTES. Residues 626–639 are compositionally biased toward low complexity; that stretch reads SNGSNTTTSSRSNT.

It belongs to the VPS51 family. Component of the Golgi-associated retrograde protein (GARP) complex, composed by VPS51, VPS52, VPS53 and VPS54. Component of the endosome-associated retrograde protein (EARP) complex, composed of VPS51, VPS52, VPS53 and VPS50. Interacts with VPS52. In terms of tissue distribution, expressed in primary and lateral roots, shoots of seedlings and flowers.

The protein localises to the golgi apparatus. It localises to the trans-Golgi network. Its subcellular location is the recycling endosome. The protein resides in the prevacuolar compartment. Functionally, acts as a component of the GARP complex that is involved in retrograde transport from early and late endosomes to the trans-Golgi network (TGN). The GARP complex is required for the maintenance of protein retrieval from endosomes to the TGN, acid hydrolase sorting, lysosome function, endosomal cholesterol traffic and autophagy. VPS51 participates in retrograde transport of acid hydrolase receptors, likely by promoting tethering and SNARE-dependent fusion of endosome-derived carriers to the TGN. Acts as a component of the EARP complex that is involved in endocytic recycling. The EARP complex associates with Rab4-positive endosomes and promotes recycling of internalized transferrin receptor (TFRC) to the plasma membrane. Required for vacuolar targeting and cellular trafficking. Involved in the regulation of vascular tissue patterning, probably by regulating PIN1 expression pattern, thus modulating auxin flux. Important to prevent PIN1 accumulation within margin cells, possibly by targeting PIN1 to the lytic vacuole. Regulates PIN1 and ATHB8 expression pattern in secondary veins. This Arabidopsis thaliana (Mouse-ear cress) protein is Vacuolar protein sorting-associated protein 51 homolog.